Consider the following 528-residue polypeptide: Chaperonin GroEL, chloroplastic (528 aa).

Residues 29 to 32, 86 to 90, glycine 415, 481 to 483, and aspartate 497 contribute to the ATP site; these read TLGP, DGTTT, and NAA.

The protein belongs to the chaperonin (HSP60) family. As to quaternary structure, forms a cylinder of 14 subunits composed of two heptameric rings stacked back-to-back. Interacts with the co-chaperonin GroES.

Its subcellular location is the plastid. The protein localises to the chloroplast. It carries out the reaction ATP + H2O + a folded polypeptide = ADP + phosphate + an unfolded polypeptide.. Its function is as follows. Together with its co-chaperonin GroES, plays an essential role in assisting protein folding. The GroEL-GroES system forms a nano-cage that allows encapsulation of the non-native substrate proteins and provides a physical environment optimized to promote and accelerate protein folding. In Trieres chinensis (Marine centric diatom), this protein is Chaperonin GroEL, chloroplastic.